Consider the following 168-residue polypeptide: Photosystem I assembly protein Ycf3 (168 aa).

TPR repeat units follow at residues 35-68, 72-105, and 120-153; these read AFTY…EIDP, SYIL…NPFL, and GEQA…TPGN.

The protein belongs to the Ycf3 family.

It is found in the plastid. The protein localises to the chloroplast thylakoid membrane. Essential for the assembly of the photosystem I (PSI) complex. May act as a chaperone-like factor to guide the assembly of the PSI subunits. The sequence is that of Photosystem I assembly protein Ycf3 from Lactuca sativa (Garden lettuce).